The sequence spans 352 residues: C-C chemokine receptor type 5 (352 aa).

The Extracellular segment spans residues 1–30 (MDYQVSSPIYDINYYTSEPCQKINVKQIAA). Sulfotyrosine is present on Y3. 2 O-linked (GalNAc...) serine glycosylation sites follow: S6 and S7. 3 positions are modified to sulfotyrosine: Y10, Y14, and Y15. 2 disulfide bridges follow: C20–C269 and C101–C178. The helical transmembrane segment at 31–58 (RLLPPLYSLVFIFGFVGNMLVILILINC) threads the bilayer. Over 59 to 68 (KRLKSMTDIY) the chain is Cytoplasmic. The chain crosses the membrane as a helical span at residues 69–89 (LLNLAISDLFFLLTVPFWAHY). Over 90-102 (AAAQWDFGNTMCQ) the chain is Extracellular. Residues 103–124 (LLTGLYFIGFFSGIFFIILLTI) traverse the membrane as a helical segment. Residues 125-141 (DRYLAVVHAVFALKART) are Cytoplasmic-facing. Residues 142–166 (VTFGVVTSVITWVVAVFASLPGIIF) traverse the membrane as a helical segment. Over 167-198 (TRSQKEGLHYTCSSHFPYSQYQFWKNFQTLKI) the chain is Extracellular. A helical membrane pass occupies residues 199 to 218 (VILGLVLPLLVMVICYSGIL). Topologically, residues 219–235 (KTLLRCRNEKKRHRAVR) are cytoplasmic. Residues 236 to 260 (LIFTIMIVYFLFWAPYNIVLLLNTF) traverse the membrane as a helical segment. Residues 261 to 277 (QEFFGLNNCSSSNRLDQ) are Extracellular-facing. Residues 278-301 (AMQVTETLGMTHCCINPIIYAFVG) form a helical membrane-spanning segment. Over 302–352 (EKFRNYLLVFFQKHIAKRFCKCCSIFQQEAPERASSVYTRSTGEQEISVGL) the chain is Cytoplasmic. 3 S-palmitoyl cysteine lipidation sites follow: C321, C323, and C324. 4 positions are modified to phosphoserine; by BARK1: S336, S337, S342, and S349.

It belongs to the G-protein coupled receptor 1 family. In terms of assembly, interacts with PRAF2. Efficient ligand binding to CCL3/MIP-1alpha and CCL4/MIP-1beta requires sulfation, O-glycosylation and sialic acid modifications. Glycosylation on Ser-6 is required for efficient binding of CCL4. Interacts with GRK2. Interacts with ARRB1 and ARRB2. Interacts with CNIH4. Interacts with S100A4; this interaction stimulates T-lymphocyte chemotaxis. (Microbial infection) Interacts with HIV-1 surface protein gp120. As to quaternary structure, (Microbial infection) May interact with human cytomegalovirus/HHV-5 protein UL78. Post-translationally, sulfated on at least 2 of the N-terminal tyrosines. Sulfation contributes to the efficiency of HIV-1 entry and is required for efficient binding of the chemokines, CCL3 and CCL4. In terms of processing, O-glycosylated, but not N-glycosylated. Ser-6 appears to be the major site even if Ser-7 may be also O-glycosylated. Also sialylated glycans present which contribute to chemokine binding. Thr-16 and Ser-17 may also be glycosylated and, if so, with small moieties such as a T-antigen. Palmitoylation in the C-terminal is important for cell surface expression, and to a lesser extent, for HIV entry. Post-translationally, phosphorylation on serine residues in the C-terminal is stimulated by binding CC chemokines especially by APO-RANTES. Highly expressed in spleen, thymus, in the myeloid cell line THP-1, in the promyeloblastic cell line KG-1a and on CD4+ and CD8+ T-cells. Medium levels in peripheral blood leukocytes and in small intestine. Low levels in ovary and lung.

The protein resides in the cell membrane. Its function is as follows. Receptor for a number of inflammatory CC-chemokines including CCL3/MIP-1-alpha, CCL4/MIP-1-beta and RANTES and subsequently transduces a signal by increasing the intracellular calcium ion level. May play a role in the control of granulocytic lineage proliferation or differentiation. Participates in T-lymphocyte migration to the infection site by acting as a chemotactic receptor. In terms of biological role, (Microbial infection) Acts as a coreceptor (CD4 being the primary receptor) of human immunodeficiency virus-1/HIV-1. The chain is C-C chemokine receptor type 5 from Homo sapiens (Human).